The sequence spans 502 residues: Hexose transporter 1 (502 aa).

Topologically, residues 1–26 (MKKSSKEISSSQSLKNGGSDHFFNTS) are cytoplasmic. A helical transmembrane segment spans residues 27–47 (LMYVLAACLASFIFGYQVSVL). Over 48 to 76 (NTIKNFIVIEFGWCTGNKVECDDSTLKSS) the chain is Extracellular. C61 and C68 are disulfide-bonded. The helical transmembrane segment at 77–97 (FLLASVFIGAVVGSGFSGYLV) threads the bilayer. Residues 98 to 102 (QHGRR) are Cytoplasmic-facing. Residues 103 to 123 (FSLLVIYNFFILVSILTSITH) traverse the membrane as a helical segment. At 124-132 (HFHTILFSR) the chain is on the extracellular side. Residues 133 to 153 (LLSGFGIGLITVSVPMYISEM) form a helical membrane-spanning segment. Residues 154–163 (THKDKKGAYG) are Cytoplasmic-facing. Residues 164–184 (VLHQLFITFGIFVAVLLGMAM) form a helical membrane-spanning segment. Q167 is an alpha-D-glucose binding site. A beta-D-glucose-binding site is contributed by Q167. The Extracellular portion of the chain corresponds to 185-205 (GEAPDAKSVDALGEFQKIWWR). Residues 206 to 226 (LMFFFPCLISILGIVLLTFFY) traverse the membrane as a helical segment. Residues 227 to 291 (KEETPYYLFE…RAMQIPSYRN (65 aa)) are Cytoplasmic-facing. The chain crosses the membrane as a helical span at residues 292 to 312 (VILLGCILSGLQQFTGINVLV). Alpha-D-glucose is bound by residues Q303, Q304, and N309. Q303 lines the beta-D-glucose pocket. N309 provides a ligand contact to beta-D-glucose. At 313-329 (SNSNELYKEFLSNKLIT) the chain is on the extracellular side. A helical transmembrane segment spans residues 330 to 350 (TLSVIMTVVNFLMTFPAIYIV). N339 provides a ligand contact to beta-D-glucose. Topologically, residues 351-356 (EKLGRK) are cytoplasmic. The helical transmembrane segment at 357–377 (TLLLCGCAGVICAFLPTAIAN) threads the bilayer. Residues 378–390 (QIDSTSAFVKNLS) are Extracellular-facing. A helical membrane pass occupies residues 391–411 (IAATFVMIISFAVSYGPVLWI). W410 lines the alpha-D-glucose pocket. Residues 412–427 (YLHEMFPSEIKDSAAS) lie on the Cytoplasmic side of the membrane. A helical membrane pass occupies residues 428–448 (LASLVNWVCAIIVVFPSDIII). Topologically, residues 449 to 453 (KKSPT) are extracellular. Residues 454–474 (ILFFIFSGMSILSFLFIFFFI) traverse the membrane as a helical segment. Topologically, residues 475–502 (KETKGGEIGTSPYITMEERQKHMGKSAV) are cytoplasmic.

This sequence belongs to the major facilitator superfamily. Sugar transporter (TC 2.A.1.1) family. Homodimer.

It is found in the cell membrane. The enzyme catalyses D-glucose(out) = D-glucose(in). It carries out the reaction D-fructose(out) = D-fructose(in). The catalysed reaction is D-galactose(in) = D-galactose(out). It catalyses the reaction D-mannose(out) = D-mannose(in). The enzyme catalyses D-glucosamine(out) = D-glucosamine(in). It carries out the reaction D-xylose(out) = D-xylose(in). Inhibited by compound 3361 (3-O-((undec-10-en)-1-yl)-D-glucose). In terms of biological role, sodium-independent facilitative hexose transporter. Can transport D-glucose and D-fructose. Can transport D-mannose, D-galactose, D-xylose and D-glucosamine. The polypeptide is Hexose transporter 1 (Plasmodium vivax (strain Brazil I)).